Reading from the N-terminus, the 190-residue chain is Glutamyl-tRNA(Gln) amidotransferase subunit C, mitochondrial (190 aa).

The transit peptide at Met1–Phe96 directs the protein to the mitochondrion. The tract at residues Lys28 to Ser57 is disordered.

This sequence belongs to the GatC family. Subunit of the heterotrimeric GatCAB amidotransferase (AdT) complex, composed of A, B and C subunits.

It is found in the mitochondrion. The enzyme catalyses L-glutamyl-tRNA(Gln) + L-glutamine + ATP + H2O = L-glutaminyl-tRNA(Gln) + L-glutamate + ADP + phosphate + H(+). Functionally, allows the formation of correctly charged Gln-tRNA(Gln) through the transamidation of misacylated Glu-tRNA(Gln) in the mitochondria. The reaction takes place in the presence of glutamine and ATP through an activated gamma-phospho-Glu-tRNA(Gln). This is Glutamyl-tRNA(Gln) amidotransferase subunit C, mitochondrial from Loa loa (Eye worm).